The primary structure comprises 380 residues: Mitogen-activated protein kinase 3 (380 aa).

The residue at position 2 (A2) is an N-acetylalanine. In terms of domain architecture, Protein kinase spans 43-331 (YTQLQYIGEG…VEEALAHPYL (289 aa)). Residues 49–57 (IGEGAYGMV) and K72 contribute to the ATP site. Residue D167 is the Proton acceptor of the active site. T199 is subject to Phosphothreonine. Phosphothreonine; by MAP2K1 and MAP2K2 is present on T203. Residues 203-205 (TEY) carry the TXY motif. Y205 is modified (phosphotyrosine; by MAP2K1 and MAP2K2). Position 208 is a phosphothreonine; by autocatalysis (T208).

The protein belongs to the protein kinase superfamily. CMGC Ser/Thr protein kinase family. MAP kinase subfamily. Binds both upstream activators and downstream substrates in multimolecular complexes. Found in a complex with at least BRAF, HRAS, MAP2K1/MEK1, MAPK3 and RGS14. Interacts with ADAM15, ARRB2, CANX, DAPK1 (via death domain), HSF4, IER3, MAP2K1/MEK1, MORG1, NISCH, PEA15, SGK1 and MKNK2. MKNK2 isoform 1 binding prevents from dephosphorylation and inactivation. Interacts with TPR. Interacts with HSF1 (via D domain and preferentially with hyperphosphorylated form); this interaction occurs upon heat shock. Interacts with CDKN2AIP. Interacts with CAVIN4. Interacts with GIT1; this interaction is necessary for MAPK3 localization to focal adhesions. Interacts with ZNF263. Interacts with EBF4. Mg(2+) is required as a cofactor. In terms of processing, phosphorylated upon FLT3 and KIT signaling. Ligand-activated ALK induces tyrosine phosphorylation. Dephosphorylated by PTPRJ at Tyr-205. Dually phosphorylated on Thr-203 and Tyr-205, which activates the enzyme. Ubiquitinated by TRIM15 via 'Lys-63'-linked ubiquitination; leading to activation. Deubiquitinated by CYLD. As to expression, highest levels within the nervous system, expressed in different tissues, mostly in intestine, placenta and lung.

The protein localises to the cytoplasm. Its subcellular location is the nucleus. The protein resides in the membrane. It localises to the caveola. It is found in the cell junction. The protein localises to the focal adhesion. The catalysed reaction is L-seryl-[protein] + ATP = O-phospho-L-seryl-[protein] + ADP + H(+). It carries out the reaction L-threonyl-[protein] + ATP = O-phospho-L-threonyl-[protein] + ADP + H(+). Its activity is regulated as follows. Phosphorylated by MAP2K1/MEK1 and MAP2K2/MEK2 on Thr-203 and Tyr-205 in response to external stimuli like insulin or NGF. Both phosphorylations are required for activity. This phosphorylation causes dramatic conformational changes, which enable full activation and interaction of MAPK1/ERK2 with its substrates. Dephosphorylated and inactivated by DUSP3, DUSP6 and DUSP9. Serine/threonine kinase which acts as an essential component of the MAP kinase signal transduction pathway. MAPK1/ERK2 and MAPK3/ERK1 are the 2 MAPKs which play an important role in the MAPK/ERK cascade. They participate also in a signaling cascade initiated by activated KIT and KITLG/SCF. Depending on the cellular context, the MAPK/ERK cascade mediates diverse biological functions such as cell growth, adhesion, survival and differentiation through the regulation of transcription, translation, cytoskeletal rearrangements. The MAPK/ERK cascade also plays a role in initiation and regulation of meiosis, mitosis, and postmitotic functions in differentiated cells by phosphorylating a number of transcription factors. About 160 substrates have already been discovered for ERKs. Many of these substrates are localized in the nucleus, and seem to participate in the regulation of transcription upon stimulation. However, other substrates are found in the cytosol as well as in other cellular organelles, and those are responsible for processes such as translation, mitosis and apoptosis. Moreover, the MAPK/ERK cascade is also involved in the regulation of the endosomal dynamics, including lysosome processing and endosome cycling through the perinuclear recycling compartment (PNRC); as well as in the fragmentation of the Golgi apparatus during mitosis. The substrates include transcription factors (such as ATF2, BCL6, ELK1, ERF, FOS, HSF4 or SPZ1), cytoskeletal elements (such as CANX, CTTN, GJA1, MAP2, MAPT, PXN, SORBS3 or STMN1), regulators of apoptosis (such as BAD, BTG2, CASP9, DAPK1, IER3, MCL1 or PPARG), regulators of translation (such as EIF4EBP1) and a variety of other signaling-related molecules (like ARHGEF2, DEPTOR, FRS2 or GRB10). Protein kinases (such as RAF1, RPS6KA1/RSK1, RPS6KA3/RSK2, RPS6KA2/RSK3, RPS6KA6/RSK4, SYK, MKNK1/MNK1, MKNK2/MNK2, RPS6KA5/MSK1, RPS6KA4/MSK2, MAPKAPK3 or MAPKAPK5) and phosphatases (such as DUSP1, DUSP4, DUSP6 or DUSP16) are other substrates which enable the propagation the MAPK/ERK signal to additional cytosolic and nuclear targets, thereby extending the specificity of the cascade. The sequence is that of Mitogen-activated protein kinase 3 (Mapk3) from Rattus norvegicus (Rat).